A 967-amino-acid chain; its full sequence is Phosphoenolpyruvate carboxylase 2 (967 aa).

A Phosphoserine modification is found at Ser-13. Catalysis depends on residues His-174 and Lys-602.

The protein belongs to the PEPCase type 1 family. Homotetramer. Mg(2+) is required as a cofactor.

It localises to the cytoplasm. The catalysed reaction is oxaloacetate + phosphate = phosphoenolpyruvate + hydrogencarbonate. The protein operates within photosynthesis; C3 acid pathway. Its activity is regulated as follows. By light-reversible phosphorylation. Functionally, through the carboxylation of phosphoenolpyruvate (PEP) it forms oxaloacetate, a four-carbon dicarboxylic acid source for the tricarboxylic acid cycle. In Zea mays (Maize), this protein is Phosphoenolpyruvate carboxylase 2 (PEP4).